Reading from the N-terminus, the 328-residue chain is Ribosomal RNA small subunit methyltransferase H (328 aa).

Residues 35 to 37 (GSH), Asp60, Phe87, Asp113, and Gln120 each bind S-adenosyl-L-methionine.

The protein belongs to the methyltransferase superfamily. RsmH family.

The protein resides in the cytoplasm. The enzyme catalyses cytidine(1402) in 16S rRNA + S-adenosyl-L-methionine = N(4)-methylcytidine(1402) in 16S rRNA + S-adenosyl-L-homocysteine + H(+). Its function is as follows. Specifically methylates the N4 position of cytidine in position 1402 (C1402) of 16S rRNA. This chain is Ribosomal RNA small subunit methyltransferase H, found in Chlorobium chlorochromatii (strain CaD3).